The primary structure comprises 535 residues: Arylsulfatase G (535 aa).

The N-terminal stretch at 1–18 is a signal peptide; that stretch reads MGWLFLKVLFLGVTFLGC. Residues Asp-44, Asp-45, and Cys-84 each contribute to the Ca(2+) site. Catalysis depends on Cys-84, which acts as the Nucleophile. Cys-84 is modified (3-oxoalanine (Cys)). A glycan (N-linked (GlcNAc...) asparagine) is linked at Asn-117. Lys-137 serves as a coordination point for substrate. The active site involves His-139. Ser-162 contributes to the substrate binding site. N-linked (GlcNAc...) asparagine glycosylation is present at Asn-215. His-251 serves as a coordination point for substrate. 2 residues coordinate Ca(2+): Asp-302 and Asn-303. 2 N-linked (GlcNAc...) asparagine glycosylation sites follow: Asn-356 and Asn-497.

Belongs to the sulfatase family. The cofactor is Ca(2+). N-glycosylated with both high mannose and complex type sugars. Post-translationally, the conversion to 3-oxoalanine (also known as C-formylglycine, FGly), of a serine or cysteine residue in prokaryotes and of a cysteine residue in eukaryotes, is critical for catalytic activity. In terms of processing, the 63-kDa precursor undergoes proteolytic processing in two steps, yielding two fragments in the first step (apparent molecular masses of 44 and 18 kDa). In the second step, the 44-kDa fragment is processed further to the 34- and 10-kDa chains. The 10-kDa chain is a cleavage product of the 44-kDa fragment but linked to the 18-kDa chain through a disulfide bridge.

It localises to the lysosome. The enzyme catalyses an aryl sulfate + H2O = a phenol + sulfate + H(+). The catalysed reaction is Hydrolysis of the 3-sulfate groups of the N-sulfo-D-glucosamine 3-O-sulfate units of heparin.. Displays arylsulfatase activity with pseudosubstrates at acidic pH, such as p-nitrocatechol sulfate. Catalyzes the hydrolysis of the 3-sulfate groups of the N-sulfo-D-glucosamine 3-O-sulfate units of heparin. This Canis lupus familiaris (Dog) protein is Arylsulfatase G (ARSG).